The primary structure comprises 469 residues: Glutamine synthetase (469 aa).

The GS beta-grasp domain maps to 13 to 97 (HEVKFVDLRF…IRCDILEPGT (85 aa)). The 365-residue stretch at 105 to 469 (PRSIAKRAED…PVEFELYYSV (365 aa)) folds into the GS catalytic domain. Mg(2+) is bound by residues E130 and E132. Position 208 (E208) interacts with ATP. E213 and E221 together coordinate Mg(2+). Residues 265–266 (NG) and G266 each bind L-glutamate. H270 serves as a coordination point for Mg(2+). Residues 272 to 274 (HMS) and S274 each bind ATP. Residues R322, E328, and R340 each coordinate L-glutamate. ATP contacts are provided by R340, R345, and K353. Mg(2+) is bound at residue E358. R360 contributes to the L-glutamate binding site. Position 398 is an O-AMP-tyrosine (Y398).

It belongs to the glutamine synthetase family. As to quaternary structure, oligomer of 12 subunits arranged in the form of two hexagons. It depends on Mn(2+) as a cofactor.

The protein resides in the cytoplasm. The catalysed reaction is L-glutamate + NH4(+) + ATP = L-glutamine + ADP + phosphate + H(+). When cellular nitrogen levels are high, the C-terminal adenylyl transferase (AT) of GlnE inhibits GlnA by covalent transfer of an adenylyl group from ATP to Tyr-398. Conversely, when nitrogen levels are low, the N-terminal adenylyl removase (AR) of GlnE activates GlnA by removing the adenylyl group by phosphorolysis. The fully adenylated enzyme complex is inactive. In terms of biological role, catalyzes the ATP-dependent biosynthesis of glutamine from glutamate and ammonia. This is Glutamine synthetase from Salmonella typhi.